Here is a 429-residue protein sequence, read N- to C-terminus: Histidine--tRNA ligase (429 aa).

It belongs to the class-II aminoacyl-tRNA synthetase family. Homodimer.

Its subcellular location is the cytoplasm. It carries out the reaction tRNA(His) + L-histidine + ATP = L-histidyl-tRNA(His) + AMP + diphosphate + H(+). In Streptococcus pneumoniae (strain Taiwan19F-14), this protein is Histidine--tRNA ligase.